The sequence spans 436 residues: UPF0597 protein YhaM (436 aa).

This sequence belongs to the UPF0597 family.

The sequence is that of UPF0597 protein YhaM from Escherichia coli O6:H1 (strain CFT073 / ATCC 700928 / UPEC).